The following is a 959-amino-acid chain: Vacuolar membrane protease (959 aa).

Residues 1 to 13 (MARLNPLSFTPGP) lie on the Cytoplasmic side of the membrane. The helical transmembrane segment at 14–34 (VIFFTCAVYIALFAALLTVHL) threads the bilayer. Residues 35–378 (RVPDYPSKTP…KVFVVFQLHT (344 aa)) are Vacuolar-facing. N-linked (GlcNAc...) asparagine glycans are attached at residues N48, N102, and N105. The disordered stretch occupies residues 128 to 149 (GSEDDEPYHSPQSSPPGERRLD). Zn(2+) is bound by residues H158 and D170. E204 serves as the catalytic Proton acceptor. Residues E205, E230, and H303 each coordinate Zn(2+). A helical membrane pass occupies residues 379-399 (MFALCVTLLVVAPLFLIGLTF). Topologically, residues 400 to 432 (GLSKADKNYLFARKAYMYSSDDDHPVHLYGWRG) are cytoplasmic. Residues 433–453 (FFRFPIVFSIATAVVVGLAYL) traverse the membrane as a helical segment. Topologically, residues 454–463 (MVRLNPLILY) are vacuolar. The helical transmembrane segment at 464–484 (SSPYAVWSMMLSAWFSVAWFF) threads the bilayer. Residues 485–498 (SRGASAMRPSALQR) are Cytoplasmic-facing. A helical membrane pass occupies residues 499–519 (MYALIWLFAGSFALLAFVTVL). The Vacuolar portion of the chain corresponds to 520–524 (SNNYQ). A helical transmembrane segment spans residues 525-545 (VAGGYFALFYFAGIFLALVLS). Residues 546–645 (YLELFFAPTK…YPGEQDWSGK (100 aa)) lie on the Cytoplasmic side of the membrane. Disordered regions lie at residues 566–594 (DEPV…DATE) and 606–635 (FARH…LKQP). A compositionally biased stretch (basic and acidic residues) spans 612-626 (RRDSIDDENGNRDEE). Residues 646-666 (LPGWLWLLQLLLVAPIVVILV) form a helical membrane-spanning segment. The Vacuolar segment spans residues 667–688 (GQIALLLTSALHQTPADGNSSL). An N-linked (GlcNAc...) asparagine glycan is attached at N685. Residues 689–709 (FVYLAFALLTTLLLAPIGPFI) form a helical membrane-spanning segment. The Cytoplasmic portion of the chain corresponds to 710-716 (HRFTWHV). Residues 717-737 (PTFVFLVCVATVIYNLVAFPF) traverse the membrane as a helical segment. At 738–959 (SREHRLKVYF…LVEGFKYFQV (222 aa)) the chain is on the vacuolar side. N785, N818, N834, N864, and N899 each carry an N-linked (GlcNAc...) asparagine glycan.

The protein belongs to the peptidase M28 family. Zn(2+) serves as cofactor.

It localises to the vacuole membrane. Its function is as follows. May be involved in vacuolar sorting and osmoregulation. This is Vacuolar membrane protease from Phaeosphaeria nodorum (strain SN15 / ATCC MYA-4574 / FGSC 10173) (Glume blotch fungus).